A 289-amino-acid polypeptide reads, in one-letter code: Polyketide biosynthesis malonyl CoA-acyl carrier protein transacylase BaeC (289 aa).

Catalysis depends on residues S87 and H193.

The protein belongs to the FabD family.

It is found in the cytoplasm. The enzyme catalyses holo-[ACP] + malonyl-CoA = malonyl-[ACP] + CoA. The protein operates within antibiotic biosynthesis; bacillaene biosynthesis. Its function is as follows. Involved in some intermediate steps for the synthesis of the antibiotic polyketide bacillaene which is involved in secondary metabolism. It catalyzes the transfer of the malonyl-CoA group to the acyl-carrier-protein AcpK (Mal-AcpK). The sequence is that of Polyketide biosynthesis malonyl CoA-acyl carrier protein transacylase BaeC (baeC) from Bacillus velezensis (strain DSM 23117 / BGSC 10A6 / LMG 26770 / FZB42) (Bacillus amyloliquefaciens subsp. plantarum).